The sequence spans 369 residues: Protein arginine N-methyltransferase 1-A (369 aa).

An SAM-dependent MTase PRMT-type domain is found at 48–369; it reads KDYYFDSYAH…LSCSTDYRMR (322 aa). Residues H61, R70, G94, E116, and E145 each coordinate S-adenosyl-L-methionine. Residues E160 and E169 contribute to the active site.

It belongs to the class I-like SAM-binding methyltransferase superfamily. Protein arginine N-methyltransferase family. In terms of assembly, homodimer. Homooctamer; individual homodimers associates to form a homooctamer and homooligomerization is required for proper localization to the cell membrane. Individual homodimers can associate to form a homohexamer. Component of a complex with lsm14a/rap55a. Interacts with cirbp.

The protein resides in the nucleus. The protein localises to the nucleoplasm. It localises to the cytoplasm. It is found in the cytosol. The catalysed reaction is L-arginyl-[protein] + 2 S-adenosyl-L-methionine = N(omega),N(omega)-dimethyl-L-arginyl-[protein] + 2 S-adenosyl-L-homocysteine + 2 H(+). The enzyme catalyses L-arginyl-[protein] + S-adenosyl-L-methionine = N(omega)-methyl-L-arginyl-[protein] + S-adenosyl-L-homocysteine + H(+). It carries out the reaction N(omega)-methyl-L-arginyl-[protein] + S-adenosyl-L-methionine = N(omega),N(omega)-dimethyl-L-arginyl-[protein] + S-adenosyl-L-homocysteine + H(+). Arginine methyltransferase that methylates (mono and asymmetric dimethylation) the guanidino nitrogens of arginyl residues present in target proteins. Constitutes the main enzyme that mediates monomethylation and asymmetric dimethylation of histone H4 'Arg-4' (H4R3me1 and H4R3me2a, respectively), a specific tag for epigenetic transcriptional activation. Methylates cirbp to regulate its subcellular location. Acts transiently during metamorphosis as a transcription coactivator, enhancing thyroid hormone (T3) receptor (TR)-mediated transcription by enhancing TR binding to the T3 response element (TRE), and histone modification through recruitment of other coactivators. This chain is Protein arginine N-methyltransferase 1-A (prmt1-a), found in Xenopus laevis (African clawed frog).